The primary structure comprises 100 residues: Urease subunit gamma (100 aa).

This sequence belongs to the urease gamma subunit family. In terms of assembly, heterotrimer of UreA (gamma), UreB (beta) and UreC (alpha) subunits. Three heterotrimers associate to form the active enzyme.

It localises to the cytoplasm. It catalyses the reaction urea + 2 H2O + H(+) = hydrogencarbonate + 2 NH4(+). Its pathway is nitrogen metabolism; urea degradation; CO(2) and NH(3) from urea (urease route): step 1/1. The chain is Urease subunit gamma from Blochmanniella pennsylvanica (strain BPEN).